Consider the following 126-residue polypeptide: Large ribosomal subunit protein bL12 (126 aa).

It belongs to the bacterial ribosomal protein bL12 family. In terms of assembly, homodimer. Part of the ribosomal stalk of the 50S ribosomal subunit. Forms a multimeric L10(L12)X complex, where L10 forms an elongated spine to which 2 to 4 L12 dimers bind in a sequential fashion. Binds GTP-bound translation factors.

Its function is as follows. Forms part of the ribosomal stalk which helps the ribosome interact with GTP-bound translation factors. Is thus essential for accurate translation. The sequence is that of Large ribosomal subunit protein bL12 from Bordetella petrii (strain ATCC BAA-461 / DSM 12804 / CCUG 43448).